A 199-amino-acid chain; its full sequence is Shikimate kinase (199 aa).

34-39 contributes to the ATP binding site; the sequence is GAGKTA. A Mg(2+)-binding site is contributed by threonine 38. Substrate is bound by residues aspartate 56, arginine 80, and glycine 102. Position 140 (arginine 140) interacts with ATP. Arginine 159 contacts substrate.

It belongs to the shikimate kinase family. Monomer. Mg(2+) serves as cofactor.

Its subcellular location is the cytoplasm. It carries out the reaction shikimate + ATP = 3-phosphoshikimate + ADP + H(+). It participates in metabolic intermediate biosynthesis; chorismate biosynthesis; chorismate from D-erythrose 4-phosphate and phosphoenolpyruvate: step 5/7. Catalyzes the specific phosphorylation of the 3-hydroxyl group of shikimic acid using ATP as a cosubstrate. This is Shikimate kinase from Cereibacter sphaeroides (strain ATCC 17023 / DSM 158 / JCM 6121 / CCUG 31486 / LMG 2827 / NBRC 12203 / NCIMB 8253 / ATH 2.4.1.) (Rhodobacter sphaeroides).